The chain runs to 30 residues: Conotoxin TVIIA (30 aa).

Disulfide bonds link C2–C14, C9–C19, and C13–C24. 4-hydroxyproline occurs at positions 10 and 11.

Post-translationally, three different forms of TVIIA exist. Pro-10 and Pro-11 of conotoxin TVIIA are hydroxylated in TVIIA, whereas Pro-10 is not hydroxylated in [Pro10]TVIIA and neither Pro-10 nor Pro-11 are hydroxylated in [Pro10,11]TVIIA. In terms of tissue distribution, expressed by the venom duct.

Its subcellular location is the secreted. Its function is as follows. By structural similarity with conotoxin GS, may inhibit the sodium channel (Nav). No effect was observed upon intracranial injections into mice and intraperitoneal injections into goldfish (25 ug). The polypeptide is Conotoxin TVIIA (Conus tulipa (Fish-hunting cone snail)).